Consider the following 274-residue polypeptide: MTQQLQTLIDNAWDNRASLSPSAAPKEVVDAVEHVIAELNNGRLRVATREGVGQWTVHQWIKKAVLLSFRLKDNELMKAGDLGFFDKVPTKFAHLSADEMAATGVRVVPPAVARRGSFIAKGAILMPSYVNIGAYVDEGTMVDTWATVGSCAQVGKNVHLSGGVGLGGVLEPLQANPTIIEDNCFIGARSEVVEGVIVEENSVISMGVYIGQSTPIYDRTTGETTYGRVPAGSVVVSGNLPKDGGRYSMYAAIIVKKVDAKTRSTTSLNDLLRD.

Substrate-binding residues include Arg-106 and Asp-143.

This sequence belongs to the transferase hexapeptide repeat family. In terms of assembly, homotrimer.

The protein localises to the cytoplasm. The catalysed reaction is (S)-2,3,4,5-tetrahydrodipicolinate + succinyl-CoA + H2O = (S)-2-succinylamino-6-oxoheptanedioate + CoA. The protein operates within amino-acid biosynthesis; L-lysine biosynthesis via DAP pathway; LL-2,6-diaminopimelate from (S)-tetrahydrodipicolinate (succinylase route): step 1/3. This Acidovorax ebreus (strain TPSY) (Diaphorobacter sp. (strain TPSY)) protein is 2,3,4,5-tetrahydropyridine-2,6-dicarboxylate N-succinyltransferase.